The primary structure comprises 384 residues: Farnesyl pyrophosphate synthase 1, mitochondrial (384 aa).

3 residues coordinate isopentenyl diphosphate: Lys89, Arg92, and Gln128. Residues Asp135 and Asp139 each coordinate Mg(2+). Arg144 provides a ligand contact to dimethylallyl diphosphate. Residue Arg145 participates in isopentenyl diphosphate binding. 5 residues coordinate dimethylallyl diphosphate: Lys232, Thr233, Gln271, Lys288, and Lys297.

It belongs to the FPP/GGPP synthase family. It depends on Mg(2+) as a cofactor. As to expression, the FPS1L mRNA accumulates preferentially in inflorescences, whereas the FPS1S mRNA is predominantly expressed in roots and inflorescences.

The protein localises to the mitochondrion. The protein resides in the cytoplasm. It carries out the reaction isopentenyl diphosphate + dimethylallyl diphosphate = (2E)-geranyl diphosphate + diphosphate. It catalyses the reaction isopentenyl diphosphate + (2E)-geranyl diphosphate = (2E,6E)-farnesyl diphosphate + diphosphate. Its pathway is isoprenoid biosynthesis; farnesyl diphosphate biosynthesis; farnesyl diphosphate from geranyl diphosphate and isopentenyl diphosphate: step 1/1. It functions in the pathway isoprenoid biosynthesis; geranyl diphosphate biosynthesis; geranyl diphosphate from dimethylallyl diphosphate and isopentenyl diphosphate: step 1/1. Catalyzes the sequential condensation of isopentenyl pyrophosphate with the allylic pyrophosphates, dimethylallyl pyrophosphate, and then with the resultant geranylpyrophosphate to the ultimate product farnesyl pyrophosphate. In Arabidopsis thaliana (Mouse-ear cress), this protein is Farnesyl pyrophosphate synthase 1, mitochondrial (FPS1).